The chain runs to 142 residues: MTIERTFSIVKPNAVAKNAIGSIYARFESAGFTLVAAKMLRLSREQAEGFYAEHKGKPFFDGLVEFMMSGPIMVQVLEGENAVQRNRDIMGATNPANALAGTLRADYADSFTANAVHGSDSIESAQREIAYFFSDDEICPRA.

ATP contacts are provided by K11, F59, R87, T93, R104, and N114. The Pros-phosphohistidine intermediate role is filled by H117.

Belongs to the NDK family. Homotetramer. Requires Mg(2+) as cofactor.

The protein resides in the cytoplasm. The enzyme catalyses a 2'-deoxyribonucleoside 5'-diphosphate + ATP = a 2'-deoxyribonucleoside 5'-triphosphate + ADP. It catalyses the reaction a ribonucleoside 5'-diphosphate + ATP = a ribonucleoside 5'-triphosphate + ADP. Its function is as follows. Major role in the synthesis of nucleoside triphosphates other than ATP. The ATP gamma phosphate is transferred to the NDP beta phosphate via a ping-pong mechanism, using a phosphorylated active-site intermediate. This Pectobacterium carotovorum subsp. carotovorum (strain PC1) protein is Nucleoside diphosphate kinase.